Consider the following 302-residue polypeptide: Spermidine synthase (302 aa).

Position 1 is an N-acetylmethionine (Met-1). A PABS domain is found at 18-253 (EGWFRETCSL…GQIGFMLCSK (236 aa)). Gln-49 contacts S-adenosyl 3-(methylsulfanyl)propylamine. Putrescine is bound at residue Tyr-79. S-adenosyl 3-(methylsulfanyl)propylamine-binding positions include Gln-80, Asp-104, Glu-124, 155 to 156 (DG), and Asp-173. Catalysis depends on Asp-173, which acts as the Proton acceptor. Residues 173–176 (DSSD) and Tyr-241 contribute to the putrescine site.

The protein belongs to the spermidine/spermine synthase family. In terms of assembly, homodimer or homotetramer.

It catalyses the reaction S-adenosyl 3-(methylsulfanyl)propylamine + putrescine = S-methyl-5'-thioadenosine + spermidine + H(+). Its pathway is amine and polyamine biosynthesis; spermidine biosynthesis; spermidine from putrescine: step 1/1. With respect to regulation, the activity is thought to be regulated mainly by the availability of decarboxylated S-adenosylmethionine. In terms of biological role, catalyzes the production of spermidine from putrescine and decarboxylated S-adenosylmethionine (dcSAM). Has a strong preference for putrescine as substrate, and has very low activity towards 1,3-diaminopropane. Has extremely low activity towards spermidine. The chain is Spermidine synthase (Srm) from Mus musculus (Mouse).